The sequence spans 2195 residues: Activating signal cointegrator 1 complex subunit 3 (2195 aa).

Residues 31–88 (EQVVARNKEIMKKRNEKKKEKDRIIEKGQLTWSYFSDSKQNKEKEKENRQIFNKFKEI) adopt a coiled-coil conformation. The span at 367 to 378 (QLKKDDKKRYKN) shows a compositional bias: basic and acidic residues. Residues 367 to 387 (QLKKDDKKRYKNDQQQQQQQQ) form a disordered region. Residues 492-675 (ESAYKSNENI…FIRAPASGTH (184 aa)) enclose the Helicase ATP-binding 1 domain. Residue 505–512 (APTGAGKT) coordinates ATP. Positions 617–620 (DEIH) match the DEAH box motif. One can recognise a Helicase C-terminal 1 domain in the interval 705-920 (NMNQLCYERL…NVNEAVNWLS (216 aa)). The 307-residue stretch at 980 to 1286 (MTELGRIASH…GSEGIREISF (307 aa)) folds into the SEC63 1 domain. One can recognise a Helicase ATP-binding 2 domain in the interval 1336-1511 (HTLYYTNNNV…WMGIDRVGLF (176 aa)). An ATP-binding site is contributed by 1349 to 1356 (SPTGSGKT). The DEAH box signature appears at 1453–1456 (DEIH). In terms of domain architecture, Helicase C-terminal 2 spans 1545-1750 (SFAAIATYSP…GTIQSKQGAI (206 aa)). The region spanning 1810-1969 (PMSMGKIASF…LPHINKDFAD (160 aa)) is the SEC63 2 domain. The segment covering 2032–2062 (TNNNSNNNDDNNNENNNNNNKKNNNNNNNNN) has biased composition (low complexity). The tract at residues 2032–2064 (TNNNSNNNDDNNNENNNNNNKKNNNNNNNNNKS) is disordered.

This sequence belongs to the helicase family.

The protein localises to the nucleus. It localises to the cytoplasm. Its subcellular location is the cytosol. It carries out the reaction Couples ATP hydrolysis with the unwinding of duplex DNA by translocating in the 3'-5' direction.. The enzyme catalyses ATP + H2O = ADP + phosphate + H(+). Its function is as follows. ATPase involved both in DNA repair and rescue of stalled ribosomes. This Dictyostelium discoideum (Social amoeba) protein is Activating signal cointegrator 1 complex subunit 3 (ascc3).